The primary structure comprises 151 residues: Macrodomain Ter protein (151 aa).

It belongs to the MatP family. As to quaternary structure, homodimer.

The protein resides in the cytoplasm. Functionally, required for spatial organization of the terminus region of the chromosome (Ter macrodomain) during the cell cycle. Prevents early segregation of duplicated Ter macrodomains during cell division. Binds specifically to matS, which is a 13 bp signature motif repeated within the Ter macrodomain. The polypeptide is Macrodomain Ter protein (Vibrio atlanticus (strain LGP32) (Vibrio splendidus (strain Mel32))).